Reading from the N-terminus, the 249-residue chain is Expansin-A18 (249 aa).

Residues 1–21 form the signal peptide; it reads MGNIVLQLLAILALCIAPARS. Positions 41 to 154 constitute an Expansin-like EG45 domain; that stretch reads GGACGYGNLY…QQVKCWRSGG (114 aa). Asn116 carries N-linked (GlcNAc...) asparagine glycosylation. An Expansin-like CBD domain is found at 164 to 243; it reads YFELVLVTNM…GWSFGQTFST (80 aa).

Belongs to the expansin family. Expansin A subfamily. As to expression, expressed in roots.

The protein resides in the secreted. The protein localises to the cell wall. Its subcellular location is the membrane. Its function is as follows. May cause loosening and extension of plant cell walls by disrupting non-covalent bonding between cellulose microfibrils and matrix glucans. No enzymatic activity has been found. May be required for rapid internodal elongation in deepwater rice during submergence. In Oryza sativa subsp. japonica (Rice), this protein is Expansin-A18 (EXPA18).